The following is a 437-amino-acid chain: Chaperone SurA (437 aa).

Residues 1 to 27 (MHNHVFKTIARHGLIALFFFFSISAMA) form the signal peptide. PpiC domains follow at residues 179-280 (QDEF…KLLN) and 290-388 (VDQT…QVLE).

Its subcellular location is the periplasm. It catalyses the reaction [protein]-peptidylproline (omega=180) = [protein]-peptidylproline (omega=0). Chaperone involved in the correct folding and assembly of outer membrane proteins. Recognizes specific patterns of aromatic residues and the orientation of their side chains, which are found more frequently in integral outer membrane proteins. May act in both early periplasmic and late outer membrane-associated steps of protein maturation. In Methylobacillus flagellatus (strain ATCC 51484 / DSM 6875 / VKM B-1610 / KT), this protein is Chaperone SurA.